The following is a 356-amino-acid chain: S-adenosylmethionine:tRNA ribosyltransferase-isomerase (356 aa).

The protein belongs to the QueA family. In terms of assembly, monomer.

It is found in the cytoplasm. It carries out the reaction 7-aminomethyl-7-carbaguanosine(34) in tRNA + S-adenosyl-L-methionine = epoxyqueuosine(34) in tRNA + adenine + L-methionine + 2 H(+). It functions in the pathway tRNA modification; tRNA-queuosine biosynthesis. Transfers and isomerizes the ribose moiety from AdoMet to the 7-aminomethyl group of 7-deazaguanine (preQ1-tRNA) to give epoxyqueuosine (oQ-tRNA). The chain is S-adenosylmethionine:tRNA ribosyltransferase-isomerase from Escherichia coli O1:K1 / APEC.